A 375-amino-acid chain; its full sequence is ELAV-like protein 2 (375 aa).

RRM domains are found at residues 67–145, 153–233, and 292–370; these read TNLI…YARP, ANLY…FANN, and WCIF…FKTS.

Belongs to the RRM elav family. As to quaternary structure, part of a ribonucleoprotein (RNP) complex, at least composed of elavl1/elrA and/or elavl2/elrB, igf2bp3/vg1RBP, ddx6/Xp54, ybx2/frgy2, lsm14b/rap55b and, in a subset of RNP complexes, stau1/staufen. Binds RNA as a homooligomer.

It is found in the cytoplasm. Its subcellular location is the cell cortex. Its function is as follows. Binds to poly-U elements and AU-rich elements (AREs) in the 3'-UTR of target mRNAs. Required for the vegetal localization of vg1 mRNA. Probably required for nervous system development. In Xenopus tropicalis (Western clawed frog), this protein is ELAV-like protein 2.